Here is a 277-residue protein sequence, read N- to C-terminus: Probable diphthine methyl ester synthase (277 aa).

S-adenosyl-L-methionine contacts are provided by residues L9, D89, G92, 117–118, L168, L227, and H252; that span reads SV.

Belongs to the diphthine synthase family.

It catalyses the reaction 2-[(3S)-amino-3-carboxypropyl]-L-histidyl-[translation elongation factor 2] + 4 S-adenosyl-L-methionine = diphthine methyl ester-[translation elongation factor 2] + 4 S-adenosyl-L-homocysteine + 3 H(+). It participates in protein modification; peptidyl-diphthamide biosynthesis. In terms of biological role, S-adenosyl-L-methionine-dependent methyltransferase that catalyzes four methylations of the modified target histidine residue in translation elongation factor 2 (EF-2), to form an intermediate called diphthine methyl ester. The four successive methylation reactions represent the second step of diphthamide biosynthesis. The protein is Probable diphthine methyl ester synthase of Arabidopsis thaliana (Mouse-ear cress).